Consider the following 349-residue polypeptide: Protein RecA (349 aa).

Residue 65-72 (GPESSGKT) participates in ATP binding.

The protein belongs to the RecA family.

The protein localises to the cytoplasm. Functionally, can catalyze the hydrolysis of ATP in the presence of single-stranded DNA, the ATP-dependent uptake of single-stranded DNA by duplex DNA, and the ATP-dependent hybridization of homologous single-stranded DNAs. It interacts with LexA causing its activation and leading to its autocatalytic cleavage. This is Protein RecA from Azotobacter vinelandii (strain DJ / ATCC BAA-1303).